The primary structure comprises 700 residues: Elongation factor G 2 (700 aa).

The tr-type G domain maps to 8–290 (ERYRNIGISA…AVVDYLPSPI (283 aa)). Residues 17-24 (AHIDAGKT), 88-92 (DTPGH), and 142-145 (NKMD) each bind GTP.

It belongs to the TRAFAC class translation factor GTPase superfamily. Classic translation factor GTPase family. EF-G/EF-2 subfamily.

It is found in the cytoplasm. Catalyzes the GTP-dependent ribosomal translocation step during translation elongation. During this step, the ribosome changes from the pre-translocational (PRE) to the post-translocational (POST) state as the newly formed A-site-bound peptidyl-tRNA and P-site-bound deacylated tRNA move to the P and E sites, respectively. Catalyzes the coordinated movement of the two tRNA molecules, the mRNA and conformational changes in the ribosome. The protein is Elongation factor G 2 (fusB) of Ralstonia nicotianae (strain ATCC BAA-1114 / GMI1000) (Ralstonia solanacearum).